Consider the following 572-residue polypeptide: MRTSQYLLSTQKETPADAEVISHQLMLRAGMIRKLASGLYTWLPTGVRVLKKVENIVREEMNNAGAIEVSMPVVQPADLWQESGRWEQYGPELLRFVDRGERPFVLGPTHEEVITDLIRGEINSYKQLPLNFFQIQTKFRDELRPRFGVMRAREFLMKDAYSFHTTQESLQETYDAMYTAYSKIFSRMDLNFRAVLADTGSIGGSASHEFQVLAESGEDDIVFSTGSDYAANIEFAEALAPTEPRAPATEELRIVDTPNAKTIAELVEQFKLPIEKTVKTLLVHAHEESGHKLVALLVRGDHDLNEIKAEKLPQVAKPLTFASEEEIRAAIGAGPGSLGPVNLSLPVIADRSVAVMSDFGAGANIDGKHYFGINWERDLALPLVADLRNVVEGDISPDGKGTLQIKRGIEVGHIFQLGTKYSEAMKATVQGEDGRNQVMTMGCYGIGVSRVVAAAIEQNHDDRGIIWPDAIAPFQVAILPMNMHKSFRVKELAEELYTTLRSHGIDVILDDRKERPGVMFADMELIGVPHNIVIGDRNLDSEEVEYKNRRVGEKQMIKTSEIVEFLLSQIKR.

It belongs to the class-II aminoacyl-tRNA synthetase family. ProS type 1 subfamily. As to quaternary structure, homodimer.

It is found in the cytoplasm. The catalysed reaction is tRNA(Pro) + L-proline + ATP = L-prolyl-tRNA(Pro) + AMP + diphosphate. Catalyzes the attachment of proline to tRNA(Pro) in a two-step reaction: proline is first activated by ATP to form Pro-AMP and then transferred to the acceptor end of tRNA(Pro). As ProRS can inadvertently accommodate and process non-cognate amino acids such as alanine and cysteine, to avoid such errors it has two additional distinct editing activities against alanine. One activity is designated as 'pretransfer' editing and involves the tRNA(Pro)-independent hydrolysis of activated Ala-AMP. The other activity is designated 'posttransfer' editing and involves deacylation of mischarged Ala-tRNA(Pro). The misacylated Cys-tRNA(Pro) is not edited by ProRS. The polypeptide is Proline--tRNA ligase (Yersinia pseudotuberculosis serotype IB (strain PB1/+)).